Consider the following 234-residue polypeptide: Potassium/proton antiporter CemA (234 aa).

4 helical membrane passes run 8 to 28, 117 to 137, 157 to 177, and 193 to 213; these read IPLRYLSSIVFVVFLPWWIPL, TICFVILSGYSILCNEELFIL, ILFVTDLCIGFHSPRGWELLI, and IILSVLVSTFPVVLDTFFKYW.

It belongs to the CemA family.

It localises to the plastid. The protein localises to the chloroplast inner membrane. It catalyses the reaction K(+)(in) + H(+)(out) = K(+)(out) + H(+)(in). Functionally, contributes to K(+)/H(+) antiport activity by supporting proton efflux to control proton extrusion and homeostasis in chloroplasts in a light-dependent manner to modulate photosynthesis. Prevents excessive induction of non-photochemical quenching (NPQ) under continuous-light conditions. Indirectly promotes efficient inorganic carbon uptake into chloroplasts. The sequence is that of Potassium/proton antiporter CemA from Citrus sinensis (Sweet orange).